A 151-amino-acid polypeptide reads, in one-letter code: UPF0178 protein Desal_2673 (151 aa).

This sequence belongs to the UPF0178 family.

The sequence is that of UPF0178 protein Desal_2673 from Maridesulfovibrio salexigens (strain ATCC 14822 / DSM 2638 / NCIMB 8403 / VKM B-1763) (Desulfovibrio salexigens).